Here is a 749-residue protein sequence, read N- to C-terminus: Chaperone protein dnaK3 (749 aa).

Threonine 198 is modified (phosphothreonine; by autocatalysis). Basic and acidic residues-rich tracts occupy residues arginine 643–arginine 653, tyrosine 661–asparagine 694, and proline 711–serine 724. Positions arginine 643 to phenylalanine 749 are disordered. The span at glycine 740 to phenylalanine 749 shows a compositional bias: acidic residues.

It belongs to the heat shock protein 70 family.

In terms of biological role, acts as a chaperone. This Synechococcus elongatus (strain ATCC 33912 / PCC 7942 / FACHB-805) (Anacystis nidulans R2) protein is Chaperone protein dnaK3 (dnaK3).